Consider the following 391-residue polypeptide: Odorant receptor 67d (391 aa).

At 1-45 (MLKMAKVEPVERYCKVIRMIRFCVGFCGNDVADPNFRMWWLTYAV) the chain is on the cytoplasmic side. A helical transmembrane segment spans residues 46-66 (MAAIAFFFACTGYTIYVGVVI). The Extracellular segment spans residues 67-71 (NGDLT). A helical membrane pass occupies residues 72 to 92 (IILQALAMVGSAVQGLTKLLV). The Cytoplasmic segment spans residues 93–140 (TANNASHMREVQNTYEDIYREYGSKGDEYAKCLEKRIRITWTLLIGFM). A helical transmembrane segment spans residues 141–161 (LVYIILLGLVITFPIFYLLIL). Topologically, residues 162 to 164 (HQK) are extracellular. The chain crosses the membrane as a helical span at residues 165-185 (VLVMQFLIPFLDHTTDGGHLI). Residues 186 to 191 (LTAAHV) lie on the Cytoplasmic side of the membrane. Residues 192-212 (ILITFGGFGNYGGDMYLFLFV) form a helical membrane-spanning segment. Residues 213–268 (THVPLIKDIFCVKLTEFNELVMKRNDFPKVRAMLCDLLVWHQLYTRMLQTTKKIYS) are Extracellular-facing. Residues 269-289 (IVLFVQLSTTCVGLLCTISCI) traverse the membrane as a helical segment. Topologically, residues 290–297 (FMKAWPAA) are cytoplasmic. The chain crosses the membrane as a helical span at residues 298–318 (PLYLLYAAITLYTFCGLGTLV). Residues 319–391 (ENSNEDFLSV…FSMMLMNYLG (73 aa)) lie on the Extracellular side of the membrane.

The protein belongs to the insect chemoreceptor superfamily. Heteromeric odorant receptor channel (TC 1.A.69) family. Or67d subfamily. Interacts with Orco. Complexes exist early in the endomembrane system in olfactory sensory neurons (OSNs), coupling these complexes to the conserved ciliary trafficking pathway. In terms of tissue distribution, expressed in antenna.

The protein resides in the cell membrane. In terms of biological role, plays a role in detection and sensitivity to pheromones and signal transduction of the fatty-acid-derived male pheromone 11-cis vaccenyl acetate (cVA). Acts in concert with Snmp and lush to capture cVA molecules on the surface of Or67d expressing olfactory dendrites and facilitate their transfer to the odorant-receptor Orco complex. Necessary to mediate behavioral responses to cVA by regulating both male and female mating behavior. Activation of Or67d neurons by cVA inhibits courtship of other males, whereas in females their activation promotes receptivity to other males. May form a complex with Orco to form odorant-sensing units, providing sensitive and prolonged odorant signaling and calcium permeability. In Drosophila melanogaster (Fruit fly), this protein is Odorant receptor 67d (Or67d).